Reading from the N-terminus, the 296-residue chain is Trimeric intracellular cation channel type A (296 aa).

Topologically, residues 1–19 are lumenal; sequence MELPGALQLGELAAAFASV. The chain crosses the membrane as a helical span at residues 20-37; sequence PVFPLFDAAYFIVSVLYL. Over 38–51 the chain is Cytoplasmic; that stretch reads KYEPGAVEMSRKSP. Residues 52–73 form a helical membrane-spanning segment; the sequence is FASWLCAMLHCFGSYILADLLL. Gly-74 contacts Ca(2+). Over 74–85 the chain is Lumenal; the sequence is GESPIHYFSNNS. Residues 86–103 form a helical membrane-spanning segment; that stretch reads SVILATAVWYLIFFCPMN. Residues 104–107 are Cytoplasmic-facing; that stretch reads LFYK. The chain crosses the membrane as a helical span at residues 108-126; that stretch reads CVSFLPVKLIFVAMKEVVR. Residues Lys-122 and Arg-126 each coordinate a 1,2-diacyl-sn-glycero-3-phospho-(1D-myo-inositol-4,5-bisphosphate). The Lumenal portion of the chain corresponds to 127-144; that stretch reads VRKIAAGVHHAHHQYHHG. The chain crosses the membrane as a helical span at residues 145–162; it reads WFIMMATGWVKGSGVALM. The Cytoplasmic segment spans residues 163-183; sequence SNFEQLLRGVWRPETNEILHM. The chain crosses the membrane as a helical span at residues 184–201; the sequence is SFPTKASLYGTVLFTLQQ. Topologically, residues 202–209 are lumenal; it reads THWLPVSE. The helical transmembrane segment at 210 to 230 threads the bilayer; it reads ANLVFFFTMFMIVCKVFMTAT. The Cytoplasmic segment spans residues 231–273; sequence HSHASPFAPVEGFICPVFFGSVSSGHTSHHNQHGHSHEASYQP. Residues 256–296 form a disordered region; the sequence is HTSHHNQHGHSHEASYQPPPPVKSKEELNEGTRKRKAKKAE. The segment covering 278-287 has biased composition (basic and acidic residues); the sequence is KSKEELNEGT.

The protein belongs to the TMEM38 family. Homotrimer; conformation seems to be controled by binding to diacylglycerol (DAG).

Its subcellular location is the sarcoplasmic reticulum membrane. It localises to the nucleus membrane. It carries out the reaction K(+)(in) = K(+)(out). Channel activity is activated by a change of voltage within the sarcoplasmic reticulum lumen and blocked by luminal high Ca(2+) levels. Its function is as follows. Intracellular monovalent cation channel required for maintenance of rapid intracellular calcium release. Acts as a potassium counter-ion channel that functions in synchronization with calcium release from intracellular stores. Opened by a change of voltage within the sarcoplasmic reticulum lumen. The sequence is that of Trimeric intracellular cation channel type A (TMEM38A) from Gallus gallus (Chicken).